Here is a 382-residue protein sequence, read N- to C-terminus: D-galactonate dehydratase (382 aa).

Asp-183 serves as a coordination point for Mg(2+). His-185 serves as the catalytic Proton donor. Positions 209 and 235 each coordinate Mg(2+). His-285 (proton acceptor) is an active-site residue.

The protein belongs to the mandelate racemase/muconate lactonizing enzyme family. GalD subfamily. Mg(2+) is required as a cofactor.

The catalysed reaction is D-galactonate = 2-dehydro-3-deoxy-D-galactonate + H2O. It functions in the pathway carbohydrate acid metabolism; D-galactonate degradation; D-glyceraldehyde 3-phosphate and pyruvate from D-galactonate: step 1/3. Catalyzes the dehydration of D-galactonate to 2-keto-3-deoxy-D-galactonate. The chain is D-galactonate dehydratase from Pectobacterium atrosepticum (strain SCRI 1043 / ATCC BAA-672) (Erwinia carotovora subsp. atroseptica).